A 387-amino-acid chain; its full sequence is Fetuin-B (387 aa).

The signal sequence occupies residues 1 to 18 (MNVLLLLVLCTLAMGCGA). 2 Cystatin fetuin-B-type domains span residues 25-139 (AARP…YNCT) and 150-258 (MTCP…VTCS). The N-linked (GlcNAc...) asparagine glycan is linked to asparagine 37. 5 cysteine pairs are disulfide-bonded: cysteine 94-cysteine 105, cysteine 118-cysteine 138, cysteine 152-cysteine 155, cysteine 217-cysteine 225, and cysteine 238-cysteine 257. Asparagine 137 carries an N-linked (GlcNAc...) asparagine glycan. The interval 264–306 (APTPRGENATVNQRPANPSKTEELQQQNTAPTNSPTKAVPKGS) is disordered. The N-linked (GlcNAc...) asparagine glycan is linked to asparagine 271. Residues 272 to 299 (ATVNQRPANPSKTEELQQQNTAPTNSPT) show a composition bias toward polar residues. 2 O-linked (GalNAc...) threonine glycosylation sites follow: threonine 292 and threonine 295. Serine 320 is subject to Phosphoserine. The segment at 366–387 (KEQRSAECPGPAQKGYPFILPS) is disordered.

Belongs to the fetuin family. Liver and testis.

The protein localises to the secreted. Its function is as follows. Protease inhibitor required for egg fertilization. Required to prevent premature zona pellucida hardening before fertilization, probably by inhibiting the protease activity of ASTL, a protease that mediates the cleavage of ZP2 and triggers zona pellucida hardening. The polypeptide is Fetuin-B (FETUB) (Bos taurus (Bovine)).